Here is a 255-residue protein sequence, read N- to C-terminus: Post-GPI attachment to proteins factor 2 (255 aa).

A run of 6 helical transmembrane segments spans residues 25–45 (LAALSLPLGGFFFCVVWSLLF), 80–100 (LAIFLHLPLRLAVAKIYLEYY), 111–131 (LGILACFLNVVEDLALFCLSF), 143–163 (NAFVVFIACSECYMLMSYLLN), 185–205 (LFLVNVLAFGLAGYCFVRHNA), and 209–229 (AGVYTFFALFEYIVVLTNMGF).

This sequence belongs to the PGAP2 family.

Its subcellular location is the golgi apparatus membrane. It localises to the endoplasmic reticulum membrane. Functionally, involved in the lipid remodeling steps of GPI-anchor maturation. Required for stable expression of GPI-anchored proteins at the cell surface. In Drosophila pseudoobscura pseudoobscura (Fruit fly), this protein is Post-GPI attachment to proteins factor 2.